A 32-amino-acid chain; its full sequence is Beta-hexosaminidase (32 aa).

In terms of domain architecture, GH18 spans 1-32 (GKSSSRPLGDATLGDLDFDIEVTQDYWDDLAR). E21 acts as the Proton donor in catalysis.

Belongs to the glycosyl hydrolase 18 family. Chitinase class II subfamily.

The catalysed reaction is Hydrolysis of terminal non-reducing N-acetyl-D-hexosamine residues in N-acetyl-beta-D-hexosaminides.. Activity is decreased by HgCl(2) and maltose. Activity is stimulated by Na(2)SeO(4), BaCl(2), MgCl(2), chondroitin 6-sulfate and phenylmethylsulfonyl fluoride. Functionally, preferentially hydrolyzes pNP-GlcNAc, hydrolyzes pNP-GalNAc to a lesser extent. The chain is Beta-hexosaminidase from Palythoa caribaeorum (White encrusting zoanthid coral).